The following is a 242-amino-acid chain: Zinc finger protein ZOP1 (242 aa).

The Matrin-type zinc-finger motif lies at 11–42; it reads KWCEFCKIWIQNNPTSIRNHDLGKRHRECVDK. Positions 42-71 form a coiled coil; sequence KKLTDMRERSAAKDKELKKNEKLLQQIEAK. The segment at 154–242 is disordered; the sequence is VKKPVSSSGA…PLLGLYNRPF (89 aa). Over residues 155–172 the composition is skewed to low complexity; the sequence is KKPVSSSGAGPSVGKPPG. Basic and acidic residues predominate over residues 201-233; that stretch reads RQDEKPKKVSAEEKAALKAREAARKRVEDREKP.

In terms of assembly, component of a pre-mRNA splicing complex. Interacts with STA1. Interacts with PRP31.

It localises to the nucleus. It is found in the cajal body. In terms of biological role, nucleic acid-binding protein that promotes Pol IV-dependent small interfering RNA (siRNA) accumulation, DNA methylation and transcriptional silencing. May possess both RNA-directed DNA methylation (RdDM)-dependent and -independent roles in transcriptional silencing. Acts as a pre-mRNA splicing factor that associates with several typical components of the splicing machinery as well as with Pol II. The polypeptide is Zinc finger protein ZOP1 (Arabidopsis thaliana (Mouse-ear cress)).